The following is a 256-amino-acid chain: Small ribosomal subunit protein uS2 (256 aa).

The tract at residues 229–256 is disordered; that stretch reads PVDDNGDYGDFDEAIDEYADETDASESE. Residues 232–256 show a composition bias toward acidic residues; it reads DNGDYGDFDEAIDEYADETDASESE.

Belongs to the universal ribosomal protein uS2 family.

The polypeptide is Small ribosomal subunit protein uS2 (Picosynechococcus sp. (strain ATCC 27264 / PCC 7002 / PR-6) (Agmenellum quadruplicatum)).